Here is a 56-residue protein sequence, read N- to C-terminus: Large ribosomal subunit protein bL32 (56 aa).

A disordered region spans residues 1–26 (MAVQQNKKSRSKRGMRRSHDALSTAQ). A compositionally biased stretch (basic residues) spans 7 to 16 (KKSRSKRGMR).

This sequence belongs to the bacterial ribosomal protein bL32 family.

The polypeptide is Large ribosomal subunit protein bL32 (Shewanella denitrificans (strain OS217 / ATCC BAA-1090 / DSM 15013)).